Consider the following 324-residue polypeptide: Phospho-N-acetylmuramoyl-pentapeptide-transferase (324 aa).

The next 9 helical transmembrane spans lie at 13–33 (VLSALLMGFAFSMVLGPIFIP), 57–77 (GTPTMGGLIFFISVSVTMLII), 85–105 (GMIVLYSLIAFGIIGFLDDIL), 121–141 (MILLLLFSIALAYYGYTNIGT), 143–163 (IIIPFMNSKLNLGIFYIPLVV), 179–199 (IDGLASSVTVIVLTFFAIVGF), 201–221 (TGHYQVGVFSIALAGALLGFL), 238–260 (LALGGAIATIALILKMPLFIIIV), and 303–323 (VKLVTVFSIITLILCIIGFIA).

Belongs to the glycosyltransferase 4 family. MraY subfamily. Mg(2+) is required as a cofactor.

It localises to the cell membrane. It carries out the reaction UDP-N-acetyl-alpha-D-muramoyl-L-alanyl-gamma-D-glutamyl-meso-2,6-diaminopimeloyl-D-alanyl-D-alanine + di-trans,octa-cis-undecaprenyl phosphate = di-trans,octa-cis-undecaprenyl diphospho-N-acetyl-alpha-D-muramoyl-L-alanyl-D-glutamyl-meso-2,6-diaminopimeloyl-D-alanyl-D-alanine + UMP. It functions in the pathway cell wall biogenesis; peptidoglycan biosynthesis. In terms of biological role, catalyzes the initial step of the lipid cycle reactions in the biosynthesis of the cell wall peptidoglycan: transfers peptidoglycan precursor phospho-MurNAc-pentapeptide from UDP-MurNAc-pentapeptide onto the lipid carrier undecaprenyl phosphate, yielding undecaprenyl-pyrophosphoryl-MurNAc-pentapeptide, known as lipid I. The sequence is that of Phospho-N-acetylmuramoyl-pentapeptide-transferase from Clostridium botulinum (strain Eklund 17B / Type B).